The sequence spans 282 residues: uncharacterized protein (282 aa).

Disordered regions lie at residues 1–45 and 201–259; these read MPLE…EEDE and DRRR…KPWG. Positions 10 to 19 are enriched in basic and acidic residues; the sequence is SEMKEFKEST. A compositionally biased stretch (polar residues) spans 26 to 38; sequence SVSSEETLTQSMV. The span at 201–237 shows a compositional bias: basic and acidic residues; it reads DRRRKEDSKARSRLTRREEHSEHHRSGKSRRERERRS.

This is an uncharacterized protein from Ostreid herpesvirus 1 (isolate France) (OsHV-1).